A 131-amino-acid chain; its full sequence is MSMSDPIADMLTRIRNAQMVEKVSVAMPSSKVKVAIAQVLKDEGYIDDFAVKAEGAKSELNIALKYYAGRPVIERLERVSKPGLRVYRGRNDIPQVMNGLGVAIVSTPKGVMTDRKARATGVGGEVICYVA.

The protein belongs to the universal ribosomal protein uS8 family. As to quaternary structure, part of the 30S ribosomal subunit. Contacts proteins S5 and S12.

Functionally, one of the primary rRNA binding proteins, it binds directly to 16S rRNA central domain where it helps coordinate assembly of the platform of the 30S subunit. The sequence is that of Small ribosomal subunit protein uS8 from Burkholderia ambifaria (strain MC40-6).